The primary structure comprises 421 residues: Heterogeneous nuclear ribonucleoprotein 27C (421 aa).

RRM domains lie at 7-88 and 96-173; these read GKLF…RTLQ and YKVF…KAEP. 2 disordered regions span residues 171–191 and 240–373; these read AEPR…GGAY and GTSP…SEYD. Ser177 is subject to Phosphoserine. Over residues 240–250 the composition is skewed to polar residues; it reads GTSPQQQQYGY. The segment covering 264–273 has biased composition (pro residues); it reads PPGPQGPPPQ. The segment covering 275–284 has biased composition (polar residues); sequence SNYAGPQQTQ. Over residues 293–302 the composition is skewed to low complexity; it reads NSTSTGAPSG. Phosphoserine occurs at positions 366, 368, and 370. Tyr372 bears the Phosphotyrosine mark. Position 379 is a phosphoserine (Ser379). Residues 392 to 421 are disordered; sequence EGASNYGAGPRSAYGNDSSTQPPYATSQAV. Over residues 406–421 the composition is skewed to polar residues; sequence GNDSSTQPPYATSQAV.

Interacts with sqd; the interaction is RNA-dependent and may be specific for sqd isoform A/sqdA. Interacts with otu; the interaction is RNA-independent.

The protein localises to the nucleus. Its subcellular location is the cytoplasm. In terms of biological role, this protein is a component of ribonucleosomes. Could be needed to organize a concentration gradient of a dorsalizing morphogen (Dm) originating in the germinal vesicle. Interacts with grk mRNA (via 3' UTR) and involved in its localization to the dorsal anterior region of the oocyte during dorsal-ventral axis determination; may function as a ribonuclear protein complex together with sqd and otu. Required for polytene chromosome dispersal in nurse cells during oogenesis. May be involved in the regulation of splicing. This chain is Heterogeneous nuclear ribonucleoprotein 27C, found in Drosophila melanogaster (Fruit fly).